Reading from the N-terminus, the 196-residue chain is ATP-dependent Clp protease proteolytic subunit (196 aa).

S96 functions as the Nucleophile in the catalytic mechanism. The active site involves H121.

This sequence belongs to the peptidase S14 family. As to quaternary structure, fourteen ClpP subunits assemble into 2 heptameric rings which stack back to back to give a disk-like structure with a central cavity, resembling the structure of eukaryotic proteasomes.

The protein localises to the cytoplasm. It catalyses the reaction Hydrolysis of proteins to small peptides in the presence of ATP and magnesium. alpha-casein is the usual test substrate. In the absence of ATP, only oligopeptides shorter than five residues are hydrolyzed (such as succinyl-Leu-Tyr-|-NHMec, and Leu-Tyr-Leu-|-Tyr-Trp, in which cleavage of the -Tyr-|-Leu- and -Tyr-|-Trp bonds also occurs).. Cleaves peptides in various proteins in a process that requires ATP hydrolysis. Has a chymotrypsin-like activity. Plays a major role in the degradation of misfolded proteins. In Streptococcus equi subsp. zooepidemicus (strain H70), this protein is ATP-dependent Clp protease proteolytic subunit.